Reading from the N-terminus, the 225-residue chain is Cardiotrophin-like cytokine factor 1 (225 aa).

Positions 1–27 are cleaved as a signal peptide; it reads MDLRAGDSWGMLACLCTVLWHLPAVPA. A glycan (N-linked (GlcNAc...) asparagine) is linked at Asn-29.

Belongs to the IL-6 superfamily. In terms of assembly, forms a heteromeric complex with cardiotrophin-like cytokine CRLF1/CLF-1; the CRLF1-CLCF1 complex is a ligand for the ciliary neurotrophic factor receptor/CNTFR. The CRLF1-CLCF1 heterodimer binds SORL1 (via N-terminal ectodomain); within this complex, the interaction is mediated predominantly by the CRLF1 moiety. The tripartite signaling complex formed by CRLF1, CLCF1 and CNTFR also binds SORL1.

It localises to the secreted. Its function is as follows. In complex with CRLF1, forms a heterodimeric neurotropic cytokine that plays a crucial role during neuronal development. Also stimulates B-cells. Binds to and activates the ILST/gp130 receptor. In Mus musculus (Mouse), this protein is Cardiotrophin-like cytokine factor 1 (Clcf1).